A 158-amino-acid polypeptide reads, in one-letter code: 6,7-dimethyl-8-ribityllumazine synthase (158 aa).

Residues F24, 58 to 60, and 82 to 84 each bind 5-amino-6-(D-ribitylamino)uracil; these read AFE and AVI. Residue 87-88 participates in (2S)-2-hydroxy-3-oxobutyl phosphate binding; it reads GT. H90 functions as the Proton donor in the catalytic mechanism. 5-amino-6-(D-ribitylamino)uracil is bound at residue F115. A (2S)-2-hydroxy-3-oxobutyl phosphate-binding site is contributed by R129.

It belongs to the DMRL synthase family. As to quaternary structure, forms an icosahedral capsid composed of 60 subunits, arranged as a dodecamer of pentamers.

It carries out the reaction (2S)-2-hydroxy-3-oxobutyl phosphate + 5-amino-6-(D-ribitylamino)uracil = 6,7-dimethyl-8-(1-D-ribityl)lumazine + phosphate + 2 H2O + H(+). It participates in cofactor biosynthesis; riboflavin biosynthesis; riboflavin from 2-hydroxy-3-oxobutyl phosphate and 5-amino-6-(D-ribitylamino)uracil: step 1/2. Its function is as follows. Catalyzes the formation of 6,7-dimethyl-8-ribityllumazine by condensation of 5-amino-6-(D-ribitylamino)uracil with 3,4-dihydroxy-2-butanone 4-phosphate. This is the penultimate step in the biosynthesis of riboflavin. This Stutzerimonas stutzeri (strain A1501) (Pseudomonas stutzeri) protein is 6,7-dimethyl-8-ribityllumazine synthase.